A 311-amino-acid chain; its full sequence is Coproporphyrin III ferrochelatase (311 aa).

Residues Y12, R29, R45–Y46, S53, and Y124 contribute to the Fe-coproporphyrin III site. Fe(2+) contacts are provided by H182 and E263.

This sequence belongs to the ferrochelatase family.

Its subcellular location is the cytoplasm. The enzyme catalyses Fe-coproporphyrin III + 2 H(+) = coproporphyrin III + Fe(2+). Its pathway is porphyrin-containing compound metabolism; protoheme biosynthesis. In terms of biological role, involved in coproporphyrin-dependent heme b biosynthesis. Catalyzes the insertion of ferrous iron into coproporphyrin III to form Fe-coproporphyrin III. This chain is Coproporphyrin III ferrochelatase, found in Bacillus mycoides (strain KBAB4) (Bacillus weihenstephanensis).